The chain runs to 227 residues: UPF0441 protein YPO0661/y3517/YP_2976 (227 aa).

The segment at 198 to 227 (GGFGESVAKQSSMQRSAATSSKTTTRSMGG) is disordered. Low complexity predominate over residues 212–227 (RSAATSSKTTTRSMGG).

It belongs to the UPF0441 family.

The chain is UPF0441 protein YPO0661/y3517/YP_2976 from Yersinia pestis.